Reading from the N-terminus, the 228-residue chain is MQKLKQQVFDANMDLPRYGLVTFTWGNVSAIDRERGLVVIKPSGVAYETMKVDDMVVVDMDGKVVEGRYRPSSDTATHLALYQRYPSLGGVVHTHSTHATAWAQAGMAIPALGTTHADYFFGDIPCTRALSEEEVQGEYELNTGKVIIETLGEVEPLHTPGIVVYQHGPFAWGKDAHDAVHNAVVMEEVARMAWIARGINPGLNPIDDYLMNKHFMRKHGPNAYYGQK.

Substrate-binding positions include 26-27 (GN), 43-44 (SG), and 72-73 (SS). 3 residues coordinate Zn(2+): aspartate 74, histidine 93, and histidine 95. Catalysis depends on aspartate 118, which acts as the Proton donor/acceptor. Histidine 167 contacts Zn(2+). Residue tyrosine 225 is the Proton donor/acceptor of the active site.

Belongs to the aldolase class II family. AraD/FucA subfamily. Requires Zn(2+) as cofactor.

It catalyses the reaction L-ribulose 5-phosphate = D-xylulose 5-phosphate. Its pathway is cofactor degradation; L-ascorbate degradation; D-xylulose 5-phosphate from L-ascorbate: step 4/4. Its function is as follows. Catalyzes the isomerization of L-ribulose 5-phosphate to D-xylulose 5-phosphate. Is involved in the anaerobic L-ascorbate utilization. The sequence is that of L-ribulose-5-phosphate 4-epimerase UlaF from Salmonella paratyphi A (strain ATCC 9150 / SARB42).